The sequence spans 311 residues: Methionyl-tRNA formyltransferase (311 aa).

(6S)-5,6,7,8-tetrahydrofolate is bound at residue 109–112 (SLLP).

Belongs to the Fmt family.

The enzyme catalyses L-methionyl-tRNA(fMet) + (6R)-10-formyltetrahydrofolate = N-formyl-L-methionyl-tRNA(fMet) + (6S)-5,6,7,8-tetrahydrofolate + H(+). Attaches a formyl group to the free amino group of methionyl-tRNA(fMet). The formyl group appears to play a dual role in the initiator identity of N-formylmethionyl-tRNA by promoting its recognition by IF2 and preventing the misappropriation of this tRNA by the elongation apparatus. The protein is Methionyl-tRNA formyltransferase of Solibacter usitatus (strain Ellin6076).